The chain runs to 155 residues: Reticulon-like protein B23 (155 aa).

One can recognise a Reticulon domain in the interval 1 to 155 (MGEMGKAIGL…LNRRNGEILD (155 aa)). The next 2 membrane-spanning stretches (helical) occupy residues 30-50 (SLIS…GLLF) and 117-137 (IISG…SMLF).

The protein resides in the endoplasmic reticulum membrane. This is Reticulon-like protein B23 (RTNLB23) from Arabidopsis thaliana (Mouse-ear cress).